Reading from the N-terminus, the 128-residue chain is MPKSVIIPPGTSTPIAPFVPGTLADGVVYVSGTLPFDKDNNVVFINDPKAQTRHVLETIKTVIETAGGTMEDVTFNSIFITDWKNYAAINEIYAEFFPGDKPARFCIQCGLVKPDALVEIATVAHIGK.

The protein belongs to the RutC family.

The enzyme catalyses (Z)-3-aminoacrylate + H2O + H(+) = 3-oxopropanoate + NH4(+). Its function is as follows. Involved in pyrimidine catabolism. Catalyzes the deamination of 3-aminoacrylate to malonic semialdehyde, a reaction that can also occur spontaneously. RutC may facilitate the reaction and modulate the metabolic fitness, rather than catalyzing essential functions. The polypeptide is 3-aminoacrylate deaminase RutC (Enterobacter cloacae subsp. cloacae (strain ATCC 13047 / DSM 30054 / NBRC 13535 / NCTC 10005 / WDCM 00083 / NCDC 279-56)).